Reading from the N-terminus, the 286-residue chain is Protease HtpX homolog (286 aa).

2 consecutive transmembrane segments (helical) span residues 7-27 and 29-49; these read TFML…MIGG and SGMM…YWFS. A Zn(2+)-binding site is contributed by H131. The active site involves E132. Position 135 (H135) interacts with Zn(2+). 2 consecutive transmembrane segments (helical) span residues 146-166 and 177-197; these read LSAT…FFGG and IAGI…QMAI. Residue E202 coordinates Zn(2+).

Belongs to the peptidase M48B family. It depends on Zn(2+) as a cofactor.

The protein localises to the cell inner membrane. The sequence is that of Protease HtpX homolog from Ralstonia nicotianae (strain ATCC BAA-1114 / GMI1000) (Ralstonia solanacearum).